We begin with the raw amino-acid sequence, 231 residues long: Small ribosomal subunit protein uS3 (231 aa).

Positions 39–108 constitute a KH type-2 domain; it reads IKNYIKKRYK…EISISVLEVK (70 aa).

The protein belongs to the universal ribosomal protein uS3 family. Part of the 30S ribosomal subunit. Forms a tight complex with proteins S10 and S14.

Binds the lower part of the 30S subunit head. Binds mRNA in the 70S ribosome, positioning it for translation. In Aquifex pyrophilus, this protein is Small ribosomal subunit protein uS3.